Here is a 480-residue protein sequence, read N- to C-terminus: Iroquois-class homeodomain protein IRX-1 (480 aa).

The segment at residues 125–188 (YGDPGRPKNA…ANARRRLKKE (64 aa)) is a DNA-binding region (homeobox; TALE-type). Disordered stretches follow at residues 190 to 268 (KVTW…QGSP), 280 to 354 (SPLG…PLQH), and 401 to 480 (PHGP…LPSA). The span at 210-228 (TEGDPEKAEDDEEIDLESI) shows a compositional bias: acidic residues. Residues 229–239 (DIDKIDEHDGD) are compositionally biased toward basic and acidic residues. At Ser241 the chain carries Phosphoserine. 2 stretches are compositionally biased toward low complexity: residues 252–262 (PHAPAAPSALA) and 340–351 (HPGAHGPSAGAP). Positions 404–417 (PHLPAPPPPQPPVA) are enriched in pro residues.

The protein belongs to the TALE/IRO homeobox family.

The protein resides in the nucleus. The chain is Iroquois-class homeodomain protein IRX-1 (IRX1) from Homo sapiens (Human).